A 183-amino-acid polypeptide reads, in one-letter code: Ribosome-recycling factor (183 aa).

The protein belongs to the RRF family.

It is found in the cytoplasm. In terms of biological role, responsible for the release of ribosomes from messenger RNA at the termination of protein biosynthesis. May increase the efficiency of translation by recycling ribosomes from one round of translation to another. This Afipia carboxidovorans (strain ATCC 49405 / DSM 1227 / KCTC 32145 / OM5) (Oligotropha carboxidovorans) protein is Ribosome-recycling factor.